The following is a 472-amino-acid chain: Cell division protein FtsP (472 aa).

Residues methionine 1–alanine 27 constitute a signal peptide (tat-type signal).

This sequence belongs to the FtsP family. In terms of processing, predicted to be exported by the Tat system. The position of the signal peptide cleavage has not been experimentally proven.

It is found in the periplasm. Functionally, cell division protein that is required for growth during stress conditions. May be involved in protecting or stabilizing the divisomal assembly under conditions of stress. This is Cell division protein FtsP from Dickeya dadantii (strain 3937) (Erwinia chrysanthemi (strain 3937)).